A 79-amino-acid chain; its full sequence is MVFSLYKNIYKFVNLLKIWIINLKVIIKIIISEIIVLIGNTIHDNQKIDGITFVKNEFIISSIFYFFFLFKIIYTERKP.

2 consecutive transmembrane segments (helical) span residues 18–38 (IWII…IVLI) and 50–70 (GITF…FFLF).

It is found in the host membrane. This is an uncharacterized protein from Spiroplasma virus SpV1-R8A2 B (SpV1).